Here is a 632-residue protein sequence, read N- to C-terminus: Probable electron transfer flavoprotein-ubiquinone oxidoreductase, mitochondrial (632 aa).

93–107 (VCIVGAGPAGLSAAI) contributes to the FAD binding site. [4Fe-4S] cluster contacts are provided by cysteine 575, cysteine 601, cysteine 604, and cysteine 607. In terms of domain architecture, 4Fe-4S ferredoxin-type spans 592–621 (KRFVINSQNCVHCKTCDIKDPLQGIQWKTP).

This sequence belongs to the ETF-QO/FixC family. It depends on [4Fe-4S] cluster as a cofactor. Requires FAD as cofactor.

It is found in the mitochondrion inner membrane. The catalysed reaction is a ubiquinone + reduced [electron-transfer flavoprotein] = a ubiquinol + oxidized [electron-transfer flavoprotein] + H(+). Its function is as follows. Accepts electrons from ETF and reduces ubiquinone. This is Probable electron transfer flavoprotein-ubiquinone oxidoreductase, mitochondrial from Schizosaccharomyces pombe (strain 972 / ATCC 24843) (Fission yeast).